Consider the following 166-residue polypeptide: Signal peptidase complex catalytic subunit SEC11 (166 aa).

The Cytoplasmic segment spans residues 1 to 9; that stretch reads MNIRQQITQ. The chain crosses the membrane as a helical; Signal-anchor for type II membrane protein span at residues 10–30; it reads FLSLAYVFSSAFMLWKTLSVI. Over 31 to 166 the chain is Lumenal; the sequence is ANSHSPIVVV…LGLSSLFSNE (136 aa). Catalysis depends on charge relay system residues Ser44, His83, and Asp108. Residues 152 to 163 are C-terminal short (CTS) helix; it reads GMLGLLGLSSLF.

The protein belongs to the peptidase S26B family. As to quaternary structure, component of the signal peptidase complex (SPC) composed of a catalytic subunit SEC11 and three accessory subunits SPC1, SPC2 and SPC3. The complex induces a local thinning of the ER membrane which is used to measure the length of the signal peptide (SP) h-region of protein substrates. This ensures the selectivity of the complex towards h-regions shorter than 18-20 amino acids. SPC associates with the translocon complex.

The protein localises to the endoplasmic reticulum membrane. It catalyses the reaction Cleavage of hydrophobic, N-terminal signal or leader sequences from secreted and periplasmic proteins.. Catalytic component of the signal peptidase complex (SPC) which catalyzes the cleavage of N-terminal signal sequences from nascent proteins as they are translocated into the lumen of the endoplasmic reticulum. Specifically cleaves N-terminal signal peptides that contain a hydrophobic alpha-helix (h-region) shorter than 18-20 amino acids. This Candida albicans (strain SC5314 / ATCC MYA-2876) (Yeast) protein is Signal peptidase complex catalytic subunit SEC11 (SEC11).